A 617-amino-acid polypeptide reads, in one-letter code: pH-sensitive chloride channel 2 (617 aa).

The first 28 residues, 1-28 (MHSPGAAAYVFLQCLVALVAAVIAQSGA), serve as a signal peptide directing secretion. The Extracellular portion of the chain corresponds to 29-387 (DQPPTTVVEV…VHLAREMGFY (359 aa)). A glycan (N-linked (GlcNAc...) asparagine) is linked at N57. A compositionally biased stretch (low complexity) spans 82–96 (TVSVDSSSTTTVAST). The tract at residues 82-110 (TVSVDSSSTTTVASTQEPTSTTERTMSPE) is disordered. A compositionally biased stretch (polar residues) spans 97-106 (QEPTSTTERT). N130 is a glycosylation site (N-linked (GlcNAc...) asparagine). Positions 131-147 (ATDDNRPDAKSSGKDSE) are enriched in basic and acidic residues. Residues 131–155 (ATDDNRPDAKSSGKDSECPTLEGAD) are disordered. N184, N234, N351, and N370 each carry an N-linked (GlcNAc...) asparagine glycan. The helical transmembrane segment at 388–408 (MMDYFIPSIMLVAISWVTFWL) threads the bilayer. Residues 409–414 (QADQSA) lie on the Cytoplasmic side of the membrane. Residues 415 to 434 (PRITLGTSTMLTFITLASAQ) traverse the membrane as a helical segment. Residues 435–447 (GKTLPKVSYIKAS) are Extracellular-facing. Residues 448–468 (EIWFLGCTGFIFGSLVEFAFV) traverse the membrane as a helical segment. At 469–596 (NTIWRRKRNV…VAIWIDKRSR (128 aa)) the chain is on the cytoplasmic side. Residues 597-617 (FVFPIAFVIFNIFYWTFVYYV) form a helical membrane-spanning segment.

This sequence belongs to the ligand-gated ion channel (TC 1.A.9) family.

The protein resides in the cell membrane. It carries out the reaction chloride(in) = chloride(out). Functionally, ligand and pH-gated channel that mediates chloride transport in the mid-gut and thereby may function in larval metabolism and fluid homeostasis. Channel opening is triggered by zinc binding or, to a lesser extent, an increase in extracellular pH. This is pH-sensitive chloride channel 2 from Anopheles gambiae (African malaria mosquito).